The primary structure comprises 520 residues: Glucose-1-phosphate adenylyltransferase small subunit, chloroplastic (520 aa).

Residues 1-71 (MASVSAIGVL…RNPIIVSPKA (71 aa)) constitute a chloroplast transit peptide.

This sequence belongs to the bacterial/plant glucose-1-phosphate adenylyltransferase family. In terms of assembly, heterotetramer. In terms of tissue distribution, leaves.

The protein localises to the plastid. Its subcellular location is the chloroplast. The enzyme catalyses alpha-D-glucose 1-phosphate + ATP + H(+) = ADP-alpha-D-glucose + diphosphate. It functions in the pathway glycan biosynthesis; starch biosynthesis. Activated by 3'phosphoglycerate, inhibited by orthophosphate. Allosteric regulation. In terms of biological role, this protein plays a role in synthesis of starch. It catalyzes the synthesis of the activated glycosyl donor, ADP-glucose from Glc-1-P and ATP. This Arabidopsis thaliana (Mouse-ear cress) protein is Glucose-1-phosphate adenylyltransferase small subunit, chloroplastic (APS1).